The chain runs to 206 residues: GTP cyclohydrolase 1 (206 aa).

Zn(2+) contacts are provided by Cys97, His100, and Cys168.

This sequence belongs to the GTP cyclohydrolase I family. As to quaternary structure, toroid-shaped homodecamer, composed of two pentamers of five dimers.

It catalyses the reaction GTP + H2O = 7,8-dihydroneopterin 3'-triphosphate + formate + H(+). It participates in cofactor biosynthesis; 7,8-dihydroneopterin triphosphate biosynthesis; 7,8-dihydroneopterin triphosphate from GTP: step 1/1. This chain is GTP cyclohydrolase 1, found in Chromobacterium violaceum (strain ATCC 12472 / DSM 30191 / JCM 1249 / CCUG 213 / NBRC 12614 / NCIMB 9131 / NCTC 9757 / MK).